A 126-amino-acid polypeptide reads, in one-letter code: Protein ApaG (126 aa).

Residues 2 to 126 (DVSLPCIKIQ…FRLAVPHVLN (125 aa)) enclose the ApaG domain.

In Vibrio cholerae serotype O1 (strain ATCC 39541 / Classical Ogawa 395 / O395), this protein is Protein ApaG.